The primary structure comprises 395 residues: Na(+)/H(+) antiporter NhaA (395 aa).

The next 11 helical transmembrane spans lie at Phe-11–Ile-31, Leu-61–Val-81, Ile-96–Phe-116, Gly-127–Gly-147, Leu-156–Phe-176, Gly-179–Met-199, Met-202–Leu-222, Phe-264–Leu-284, Ile-295–Val-315, Val-331–Leu-351, and Met-366–Ala-386.

This sequence belongs to the NhaA Na(+)/H(+) (TC 2.A.33) antiporter family.

It is found in the cell inner membrane. It catalyses the reaction Na(+)(in) + 2 H(+)(out) = Na(+)(out) + 2 H(+)(in). Na(+)/H(+) antiporter that extrudes sodium in exchange for external protons. This is Na(+)/H(+) antiporter NhaA from Pseudomonas fluorescens (strain ATCC BAA-477 / NRRL B-23932 / Pf-5).